Reading from the N-terminus, the 156-residue chain is AP-1 complex subunit sigma-1 (156 aa).

The protein belongs to the adaptor complexes small subunit family. In terms of assembly, adaptor protein complex 1 (AP-1) is a heterotetramer composed of two large adaptins (gamma-type subunit and beta-type subunit), a medium adaptin (mu-type subunit) and a small adaptin (sigma-type subunit).

It localises to the golgi apparatus. It is found in the trans-Golgi network. Its subcellular location is the cytoplasmic vesicle. The protein localises to the clathrin-coated vesicle membrane. Functionally, subunit of clathrin-associated adaptor protein complex 1 that plays a role in protein sorting in the trans-Golgi network (TGN) and endosomes. The AP complexes mediate the recruitment of clathrin to membranes and the recognition of sorting signals within the cytosolic tails of transmembrane cargo molecules. Also involved in early steps of phagocytosis and macropinocytosis. The protein is AP-1 complex subunit sigma-1 (ap1s1) of Dictyostelium discoideum (Social amoeba).